The chain runs to 154 residues: Aminoalkylphosphonate N-acetyltransferase (154 aa).

The N-acetyltransferase domain occupies 14-154; the sequence is CELRHATTED…QSHFRFTKAL (141 aa).

In terms of assembly, homodimer. It depends on a divalent metal cation as a cofactor.

It catalyses the reaction aminomethylphosphonate + acetyl-CoA = 2-N-acetamidomethylphosphonate + CoA. The catalysed reaction is (S)-1-aminoethylphosphonate + acetyl-CoA = [(1S)-1-acetamidoethyl]phosphonate + CoA. Its function is as follows. Aminoalkylphosphonate N-acetyltransferase which is able to acetylate a range of aminoalkylphosphonic acids, including (S)-1-aminoethylphosphonate ((S)-1AEP) and 2-aminoethylphosphonate, using acetyl-CoA as acetyl donor. Its physiological role in S.typhimurium is unclear. However, by acetylating (S)-1AEP, PhnO would protect against the deleterious effects of (S)-1AEP, a structural analog of D-alanine that has antibacterial properties. The polypeptide is Aminoalkylphosphonate N-acetyltransferase (Salmonella typhimurium (strain LT2 / SGSC1412 / ATCC 700720)).